The sequence spans 477 residues: Protein U33 (477 aa).

This sequence belongs to the herpesviridae UL49 family.

This is Protein U33 (U33) from Homo sapiens (Human).